The sequence spans 396 residues: Non-homologous end joining protein Ku (396 aa).

Positions 9-189 constitute a Ku domain; the sequence is ISFGLVSIPV…DVAVRPQELS (181 aa). Residues 278–288 show a composition bias toward low complexity; it reads DGDAGPAAAGV. The interval 278-396 is disordered; it reads DGDAGPAAAG…SKTPPTRRSA (119 aa). A compositionally biased stretch (basic and acidic residues) spans 294–312; that stretch reads DDKASDDKASDDKASDGRR. Polar residues predominate over residues 315–336; sequence RTSSVKGASSAPGTRSTARKTP. Low complexity predominate over residues 337 to 396; the sequence is SSTRSTAKTNAATKTPPAKTSAAKASAAKTSAAKATSSRTAPKTAPRTPTSKTPPTRRSA.

This sequence belongs to the prokaryotic Ku family. In terms of assembly, homodimer. Interacts with LigD.

Functionally, with LigD forms a non-homologous end joining (NHEJ) DNA repair enzyme, which repairs dsDNA breaks with reduced fidelity. Binds linear dsDNA with 5'- and 3'- overhangs but not closed circular dsDNA nor ssDNA. Recruits and stimulates the ligase activity of LigD. The protein is Non-homologous end joining protein Ku of Frankia casuarinae (strain DSM 45818 / CECT 9043 / HFP020203 / CcI3).